A 178-amino-acid chain; its full sequence is Protein GrpE (178 aa).

The interval 1 to 22 (MSENQNPSPSPEEIEAAMSANA) is disordered.

It belongs to the GrpE family. Homodimer.

It is found in the cytoplasm. Its function is as follows. Participates actively in the response to hyperosmotic and heat shock by preventing the aggregation of stress-denatured proteins, in association with DnaK and GrpE. It is the nucleotide exchange factor for DnaK and may function as a thermosensor. Unfolded proteins bind initially to DnaJ; upon interaction with the DnaJ-bound protein, DnaK hydrolyzes its bound ATP, resulting in the formation of a stable complex. GrpE releases ADP from DnaK; ATP binding to DnaK triggers the release of the substrate protein, thus completing the reaction cycle. Several rounds of ATP-dependent interactions between DnaJ, DnaK and GrpE are required for fully efficient folding. This Acidovorax ebreus (strain TPSY) (Diaphorobacter sp. (strain TPSY)) protein is Protein GrpE.